The chain runs to 301 residues: MQTFAEISAVRGHLKTFKREGRKIAFVPTMGNLHEGHLTLVRKAREYADIVVVSIFVNPMQFDRADDLNNYPRTLEEDLSKLTAEGVDVVFTPTPEIIYPEGLDKQTFVDVPGLSTILEGASRPGHFRGVTTIVNKLFNIVQPDVACFGEKDFQQLAVIRKMVDDLAMDIEIIGVPTVREMDGLAMSSRNGLLTLDERQRAPVLARTMRWISSAIRGGRDDYASIIEDANDQLRAAGLHPDEIFIRDARTLQVITPETTQAVILMSAFLGQARLIDNQTVDMVVESKDEAESNDGTAANAE.

Residue M30 to H37 coordinates ATP. Residue H37 is the Proton donor of the active site. Q61 provides a ligand contact to (R)-pantoate. Q61 lines the beta-alanine pocket. ATP is bound at residue G149–D152. Q155 serves as a coordination point for (R)-pantoate. Residues V178 and M186–R189 each bind ATP.

This sequence belongs to the pantothenate synthetase family. As to quaternary structure, homodimer.

It localises to the cytoplasm. The enzyme catalyses (R)-pantoate + beta-alanine + ATP = (R)-pantothenate + AMP + diphosphate + H(+). It participates in cofactor biosynthesis; (R)-pantothenate biosynthesis; (R)-pantothenate from (R)-pantoate and beta-alanine: step 1/1. Catalyzes the condensation of pantoate with beta-alanine in an ATP-dependent reaction via a pantoyl-adenylate intermediate. The sequence is that of Pantothenate synthetase from Vibrio parahaemolyticus serotype O3:K6 (strain RIMD 2210633).